A 469-amino-acid polypeptide reads, in one-letter code: 3-isopropylmalate dehydratase large subunit (469 aa).

3 residues coordinate [4Fe-4S] cluster: C350, C410, and C413.

This sequence belongs to the aconitase/IPM isomerase family. LeuC type 1 subfamily. As to quaternary structure, heterodimer of LeuC and LeuD. [4Fe-4S] cluster serves as cofactor.

The catalysed reaction is (2R,3S)-3-isopropylmalate = (2S)-2-isopropylmalate. It functions in the pathway amino-acid biosynthesis; L-leucine biosynthesis; L-leucine from 3-methyl-2-oxobutanoate: step 2/4. In terms of biological role, catalyzes the isomerization between 2-isopropylmalate and 3-isopropylmalate, via the formation of 2-isopropylmaleate. This Rhodopseudomonas palustris (strain ATCC BAA-98 / CGA009) protein is 3-isopropylmalate dehydratase large subunit.